We begin with the raw amino-acid sequence, 649 residues long: MGLSTYVGTFLLCILTLSHCKSGKEEYGTVIGIDLGTTYSCVGVFKNGRVEIIANDQGNRITPSYVAFSGDGERLIGDAAKNQLTSNPKNTLFDAKRLIGRDYDDKDVQGDIKRYPFKVINKNNKPYMKVQVGSEEKGFAPEEVSAMVLSKMKEIAEAYLGTEVTHAVVTVPAYFNDAQRQATKDAGAIAGLTVLRIINEPTAAAIAYGLDKKDTEKNILVFDLGGGTFDVSLLTIDNGVFEVVATSGDTHLGGEDFDQRLIDYFVKLYKKKEGKDITKDDRAVQKLRREVEKAKRTLSTEHSTMIEIDNLFEGKDFSEPLTRARFEELNNDLFRSTLKPVMKVMEDSGLKKEDIDDIVLVGGSTRIPKIQQLVKEFFNVKEPSRGINPDEAVAYGAAVQAGVISGVEDTGDIVLLDVCPLTMGIETVGGVMTKLIPRNTVIPTKKSQIFSTAADNQPTVTIQVFEGERPMTKDNHFLGKFDLTGIPPAPRGLPQIEVTFEIDVNGILRVSAEDKGTGKKSNIVINKETNRLTPEEIERMIQDAEKFSDQDKQVKERVEVRNDLESLAYSIKNQVKDKEKMGGKLSDDEIKTIEDAADEAIKWMENNPQAETSDYKKQKANLESVVQPIVSKLYEGAAPPTESTPKEEL.

The first 20 residues, 1-20 (MGLSTYVGTFLLCILTLSHC), serve as a signal peptide directing secretion. ATP contacts are provided by residues 36–39 (GTTY), Lys-96, 226–228 (GGT), 292–299 (EKAKRTLS), and 363–366 (GSTR). Residues 125-279 (KPYMKVQVGS…KKKEGKDITK (155 aa)) are nucleotide-binding (NBD). A substrate-binding (SBD) region spans residues 399 to 499 (VQAGVISGVE…PRGLPQIEVT (101 aa)). A Prevents secretion from ER motif is present at residues 646–649 (KEEL).

The protein belongs to the heat shock protein 70 family.

The protein resides in the endoplasmic reticulum lumen. It carries out the reaction ATP + H2O = ADP + phosphate + H(+). With respect to regulation, the chaperone activity is regulated by ATP-induced allosteric coupling of the nucleotide-binding (NBD) and substrate-binding (SBD) domains. In the ADP-bound and nucleotide-free (apo) states, the two domains have little interaction. In contrast, in the ATP-bound state the two domains are tightly coupled, which results in drastically accelerated kinetics in both binding and release of polypeptide substrates. J domain-containing co-chaperones stimulate the ATPase activity and are required for efficient substrate recognition. Endoplasmic reticulum chaperone that plays a key role in protein folding and quality control in the endoplasmic reticulum lumen. Involved in the correct folding of proteins and degradation of misfolded proteins. Acts as a key repressor of the unfolded protein response (UPR). In Echinococcus multilocularis (Fox tapeworm), this protein is Endoplasmic reticulum chaperone BiP.